A 271-amino-acid polypeptide reads, in one-letter code: HTH-type transcriptional repressor AllR (271 aa).

The HTH iclR-type domain maps to 21–83; that stretch reads AQALERGIAI…SQLGWWHIGL (63 aa). The H-T-H motif DNA-binding region spans 43–62; it reads VSDISLNLDLPLSTTFRLLK. Positions 98–267 constitute an IclR-ED domain; it reads VLSVAGPFMR…ARDISTALGL (170 aa). Glyoxylate contacts are provided by residues 154 to 156, Asp-207, Cys-217, and 234 to 236; these read SGA and SIS.

Negative regulator of allantoin and glyoxylate utilization operons. Binds to the gcl promoter and to the allS-allA intergenic region. This Escherichia coli O6:H1 (strain CFT073 / ATCC 700928 / UPEC) protein is HTH-type transcriptional repressor AllR (allR).